A 308-amino-acid chain; its full sequence is Aspartate carbamoyltransferase catalytic subunit (308 aa).

Carbamoyl phosphate contacts are provided by Arg-57 and Thr-58. Lys-86 serves as a coordination point for L-aspartate. Carbamoyl phosphate contacts are provided by Arg-107, His-135, and Gln-138. Residues Arg-168 and Arg-229 each contribute to the L-aspartate site. Residues Leu-268 and Pro-269 each contribute to the carbamoyl phosphate site.

This sequence belongs to the aspartate/ornithine carbamoyltransferase superfamily. ATCase family. Heterooligomer of catalytic and regulatory chains.

The catalysed reaction is carbamoyl phosphate + L-aspartate = N-carbamoyl-L-aspartate + phosphate + H(+). Its pathway is pyrimidine metabolism; UMP biosynthesis via de novo pathway; (S)-dihydroorotate from bicarbonate: step 2/3. In terms of biological role, catalyzes the condensation of carbamoyl phosphate and aspartate to form carbamoyl aspartate and inorganic phosphate, the committed step in the de novo pyrimidine nucleotide biosynthesis pathway. The sequence is that of Aspartate carbamoyltransferase catalytic subunit from Pyrococcus horikoshii (strain ATCC 700860 / DSM 12428 / JCM 9974 / NBRC 100139 / OT-3).